A 457-amino-acid polypeptide reads, in one-letter code: Serine--tRNA ligase (457 aa).

Residue 252-254 (TAE) coordinates L-serine. ATP contacts are provided by residues 283-285 (RKE) and Val299. Glu306 provides a ligand contact to L-serine. 370 to 373 (EMVS) contributes to the ATP binding site. Thr406 contributes to the L-serine binding site.

It belongs to the class-II aminoacyl-tRNA synthetase family. Type-1 seryl-tRNA synthetase subfamily. Homodimer. The tRNA molecule binds across the dimer.

Its subcellular location is the cytoplasm. It carries out the reaction tRNA(Ser) + L-serine + ATP = L-seryl-tRNA(Ser) + AMP + diphosphate + H(+). It catalyses the reaction tRNA(Sec) + L-serine + ATP = L-seryl-tRNA(Sec) + AMP + diphosphate + H(+). It functions in the pathway aminoacyl-tRNA biosynthesis; selenocysteinyl-tRNA(Sec) biosynthesis; L-seryl-tRNA(Sec) from L-serine and tRNA(Sec): step 1/1. Functionally, catalyzes the attachment of serine to tRNA(Ser). Is also able to aminoacylate tRNA(Sec) with serine, to form the misacylated tRNA L-seryl-tRNA(Sec), which will be further converted into selenocysteinyl-tRNA(Sec). In Saccharolobus solfataricus (strain ATCC 35092 / DSM 1617 / JCM 11322 / P2) (Sulfolobus solfataricus), this protein is Serine--tRNA ligase.